Consider the following 732-residue polypeptide: Interleukin-31 receptor subunit alpha (732 aa).

The N-terminal stretch at 1–19 (MMWTWALWMLPSLCKFSLA) is a signal peptide. Over 20-519 (ALPAKPENIS…FKTLSFSVFE (500 aa)) the chain is Extracellular. 5 Fibronectin type-III domains span residues 24 to 122 (KPEN…IAKT), 124 to 225 (PPKI…TEEE), 223 to 315 (EEEA…PVAT), 319 to 416 (PAIQ…QAYA), and 421 to 515 (PSEG…TLSF). N-linked (GlcNAc...) asparagine glycans are attached at residues N37, N67, N93, N166, N187, N277, N283, N395, N455, and N504. A helical membrane pass occupies residues 520-540 (IILITSLIGGGLLILIILTVA). Residues 541-732 (YGLKKPNKLT…KLPEHTKGEV (192 aa)) lie on the Cytoplasmic side of the membrane.

The protein belongs to the type I cytokine receptor family. Type 2 subfamily. Heterodimer with OSMR. Interacts with JAK1 and STAT3. In terms of processing, N-glycosylated. In terms of tissue distribution, expressed in CD14- and CD56-positive blood cells. Expressed in macrophages. Expressed in keratinocytes. Expressed in a subset of dorsal root ganglia neurons (at protein level). Expressed at low levels in testis, ovary, brain, prostate, placenta, thymus, bone marrow, trachea and skin. Expressed in bronchial and alveolar epithelial cells and pulmonary fibroblasts. Detected in all of the myelomonocytic lineage. Isoform 6: Expressed at higher levels in lesional skin compared to healthy skin of atopic dermatitis patients.

It localises to the cell membrane. It is found in the presynaptic cell membrane. Its subcellular location is the cell projection. The protein resides in the axon. Associates with OSMR to form the interleukin-31 receptor which activates STAT3 and to a lower extent STAT1 and STAT5. May function in skin immunity. Mediates IL31-induced itch, probably in a manner dependent on cation channels TRPA1 and TRPV1. Positively regulates numbers and cycling status of immature subsets of myeloid progenitor cells in bone marrow in vivo and enhances myeloid progenitor cell survival in vitro. This chain is Interleukin-31 receptor subunit alpha (IL31RA), found in Homo sapiens (Human).